The sequence spans 335 residues: MKQISATSGPTNIGLLSVGSYRPQRAVTNDELCQNIDSSDEWIYSRTGIKTRRFAARDESTASMATEAGREAIAKAGLEASDIDCVVVATSTHFLQTPACGPAVAAALGATGVPAFDISAGCAGFGYALGVAADMVRGGTAGKVLVLGSEKLSPTVDMTDRSNCFIFADGAAGVVVGETPTQGIGPTVWGSDGTQATAIRQDIDWMDYLDRPTGPRPFLRLEGSAVFRWAAFEMGKVGQQAMDAAGVRPDEIDVFLPHQANSRINEILAKSLELRPDAVIANDIEHTGNTSAASIPLAMAEVLATGAAKAGDLALLIGYGAGLSYAAQVVRLPPG.

Residues C122 and H258 contribute to the active site. The segment at 259–263 (QANSR) is ACP-binding. The active site involves N289.

Belongs to the thiolase-like superfamily. FabH family. As to quaternary structure, homodimer.

Its subcellular location is the cytoplasm. The enzyme catalyses malonyl-[ACP] + dodecanoyl-CoA + H(+) = 3-oxotetradecanoyl-[ACP] + CO2 + CoA. It participates in lipid metabolism; fatty acid biosynthesis. The protein operates within lipid metabolism; mycolic acid biosynthesis. Functionally, catalyzes the condensation reaction of fatty acid synthesis by the addition to an acyl acceptor of two carbons from malonyl-ACP. Catalyzes the first condensation reaction which initiates fatty acid synthesis and may therefore play a role in governing the total rate of fatty acid production. Possesses both acetoacetyl-ACP synthase and acetyl transacylase activities. Its substrate specificity determines the biosynthesis of branched-chain and/or straight-chain of fatty acids. The sequence is that of Mycobacterial beta-ketoacyl-[acyl-carrier-protein] synthase III from Mycobacterium avium (strain 104).